Reading from the N-terminus, the 538-residue chain is Lipid scramblase CLPTM1L (538 aa).

Residues 1 to 10 are Cytoplasmic-facing; sequence MWSGRSSFTS. The helical transmembrane segment at 11–31 threads the bilayer; that stretch reads LVVGVFVVYVVHTCWVMYGIV. The Extracellular portion of the chain corresponds to 32-284; it reads YTRPCSGDAN…VKGIFVDTNL (253 aa). Asparagine 91, asparagine 101, and asparagine 229 each carry an N-linked (GlcNAc...) asparagine glycan. A helical transmembrane segment spans residues 285 to 305; the sequence is YFLALTFFVAAFHLLFDFLAF. Over 306–324 the chain is Cytoplasmic; it reads KNDISFWKKKKSMIGMSTK. Residues 325–342 form a helical membrane-spanning segment; it reads AVLWRCFSTVVIFLFLLD. The Extracellular portion of the chain corresponds to 343–346; the sequence is EQTS. Residues 347-364 form a helical membrane-spanning segment; sequence LLVLVPAGVGAAIELWKV. At 365-402 the chain is on the cytoplasmic side; the sequence is KKALKMTIFWRGLMPEFQFGTYSESERKTEEYDTQAMK. Residues 403-423 traverse the membrane as a helical segment; it reads YLSYLLYPLCVGGAVYSLLNI. The Extracellular portion of the chain corresponds to 424–428; that stretch reads KYKSW. The helical transmembrane segment at 429-449 threads the bilayer; the sequence is YSWLINSFVNGVYAFGFLFML. Topologically, residues 450–538 are cytoplasmic; the sequence is PQLFVNYKLK…EKATRAPHTD (89 aa).

Belongs to the CLPTM1 family. Ubiquitously expressed.

The protein localises to the endoplasmic reticulum membrane. The enzyme catalyses a 6-(alpha-D-glucosaminyl)-1-(1,2-diacyl-sn-glycero-3-phospho)-1D-myo-inositol(in) = a 6-(alpha-D-glucosaminyl)-1-(1,2-diacyl-sn-glycero-3-phospho)-1D-myo-inositol(out). It catalyses the reaction 6-(alpha-D-glucosaminyl)-(1-octadecanoyl,2-(9Z)-octadecenoyl-sn-glycero-3-phospho)-1D-myo-inositol(in) = 6-(alpha-D-glucosaminyl)-(1-octadecanoyl,2-(9Z)-octadecenoyl-sn-glycero-3-phospho)-1D-myo-inositol(out). It carries out the reaction a 1,2-diacyl-sn-glycero-3-phospho-(1D-myo-inositol)(in) = a 1,2-diacyl-sn-glycero-3-phospho-(1D-myo-inositol)(out). The catalysed reaction is a 1,2-diacyl-sn-glycero-3-phosphocholine(in) = a 1,2-diacyl-sn-glycero-3-phosphocholine(out). The enzyme catalyses a 1,2-diacyl-sn-glycero-3-phosphoethanolamine(in) = a 1,2-diacyl-sn-glycero-3-phosphoethanolamine(out). Scramblase that mediates the translocation of glucosaminylphosphatidylinositol (alpha-D-GlcN-(1-6)-(1,2-diacyl-sn-glycero-3-phospho)-1D-myo-inositol, GlcN-PI) across the endoplasmic reticulum (ER) membrane, from the cytosolic leaflet to the luminal leaflet of the ER membrane, where it participates in the biosynthesis of glycosylphosphatidylinositol (GPI). GPI is a lipid glycoconjugate involved in post-translational modification of proteins. Can also translocate 1,2-diacyl-sn-glycero-3-phospho-(1D-myo-inositol) (phosphatidylinositol or PI), as well as several other phospholipids (1,2-diacyl-sn-glycero-3-phosphocholine, 1,2-diacyl-sn-glycero-3-phosphoethanolamine), and N-acetylglucosaminylphosphatidylinositol (GlcNAc-PI) in vitro. In Homo sapiens (Human), this protein is Lipid scramblase CLPTM1L (CLPTM1L).